Consider the following 320-residue polypeptide: Mitochondrial oxaloacetate transport protein (320 aa).

Solcar repeat units lie at residues 21–114 (LGPV…IRRT), 126–218 (NKLA…AKRM), and 227–313 (EGMI…TNKL). 6 consecutive transmembrane segments (helical) span residues 26–47 (GFLS…FEVI), 91–111 (GTAY…YEPI), 129–145 (AINV…GALF), 197–217 (AILR…WAKR), 233–253 (LTAS…FDTV), and 285–306 (LYKG…CLTF).

It belongs to the mitochondrial carrier (TC 2.A.29) family.

It localises to the mitochondrion inner membrane. The catalysed reaction is a dicarboxylate(in) + sulfate(out) = a dicarboxylate(out) + sulfate(in). It catalyses the reaction (2S)-2-isopropylmalate(in) + sulfate(out) = (2S)-2-isopropylmalate(out) + sulfate(in). The enzyme catalyses (2R,3S)-3-isopropylmalate(in) + sulfate(out) = (2R,3S)-3-isopropylmalate(out) + sulfate(in). It carries out the reaction malonate(in) + sulfate(out) = malonate(out) + sulfate(in). The catalysed reaction is oxaloacetate(in) + sulfate(out) = oxaloacetate(out) + sulfate(in). It catalyses the reaction thiosulfate(in) + sulfate(out) = thiosulfate(out) + sulfate(in). Its function is as follows. Antiporter that exchanges dicarboxylates and sulfur oxoanions across the inner membrane of mitochondria. Exports alpha-isopropylmalate from mitochondrial matrix to the cytosol, where it serves as a precursor for leucine biosynthesis. The polypeptide is Mitochondrial oxaloacetate transport protein (oac1) (Schizosaccharomyces pombe (strain 972 / ATCC 24843) (Fission yeast)).